The chain runs to 233 residues: Sugar fermentation stimulation protein homolog (233 aa).

Belongs to the SfsA family.

This Rhodospirillum centenum (strain ATCC 51521 / SW) protein is Sugar fermentation stimulation protein homolog.